Here is a 697-residue protein sequence, read N- to C-terminus: Phenylalanine--tRNA ligase beta subunit, chloroplastic (697 aa).

The 86-residue stretch at 283–368 folds into the B5 domain; it reads NISRILFIDK…RIYGFDNFIS (86 aa). Residues D346, D352, E355, and E356 each coordinate Mg(2+). The FDX-ACB domain maps to 609 to 697; it reads SSYPSLTRDI…IDDLLNEYKL (89 aa).

This sequence belongs to the phenylalanyl-tRNA synthetase beta subunit family. Type 1 subfamily. In terms of assembly, tetramer of two alpha and two beta subunits. Requires Mg(2+) as cofactor.

It localises to the plastid. The protein localises to the chloroplast. It carries out the reaction tRNA(Phe) + L-phenylalanine + ATP = L-phenylalanyl-tRNA(Phe) + AMP + diphosphate + H(+). The sequence is that of Phenylalanine--tRNA ligase beta subunit, chloroplastic from Gracilaria tenuistipitata var. liui (Red alga).